The following is a 1861-amino-acid chain: Polyketide synthase 2 (1861 aa).

Residues 109 to 525 enclose the Ketosynthase family 3 (KS3) domain; sequence DSKIAIIGMS…GGNSALLLED (417 aa). Active-site for beta-ketoacyl synthase activity residues include C264, H399, and H441. Positions 626–931 are malonyl-CoA:ACP transacylase (MAT) domain; the sequence is GFVFSGQGAQ…PSLHRKDDGW (306 aa). S716 functions as the For acyl/malonyl transferase activity in the catalytic mechanism. Residues 1008 to 1312 form a product template (PT) domain region; it reads TSSVQKVIQQ…VFGGMTVLPP (305 aa). The segment at 1012–1146 is N-terminal hotdog fold; it reads QKVIQQTDGP…CILRFADPKS (135 aa). The PKS/mFAS DH domain maps to 1012–1318; the sequence is QKVIQQTDGP…VLPPRRGADA (307 aa). Catalysis depends on H1045, which acts as the Proton acceptor; for dehydratase activity. Residues 1174 to 1318 form a C-terminal hotdog fold region; it reads DSLLSKGIVY…VLPPRRGADA (145 aa). The Proton donor; for dehydratase activity role is filled by D1232. The Carrier 1 domain occupies 1356–1433; that stretch reads SPQSGAIHRI…ELRLFLAADQ (78 aa). S1393 is subject to O-(pantetheine 4'-phosphoryl)serine. Residues 1441 to 1470 are disordered; sequence CESSNGQHTPQTSDKGSGTLTAQKPDHDTD. A compositionally biased stretch (polar residues) spans 1442–1462; the sequence is ESSNGQHTPQTSDKGSGTLTA. In terms of domain architecture, Carrier 2 spans 1472-1546; sequence EMTLNRVCAI…SLQKTLRGTE (75 aa). S1506 carries the O-(pantetheine 4'-phosphoryl)serine modification. A thioesterase (TE) domain region spans residues 1582–1855; it reads ASAPHATSIL…IIEMSNLIGD (274 aa). S1685 serves as the catalytic For thioesterase activity.

Its function is as follows. Polyketide synthase; part of the Pks2 gene cluster that mediates the formation of infectious structures (appressoria), enabling these fungi to kill insects faster. The product of the Pks2 gene cluster is different from the one of Pks1 and has still not been identified. The protein is Polyketide synthase 2 of Metarhizium acridum (strain CQMa 102).